The following is a 607-amino-acid chain: UvrABC system protein C (607 aa).

Residues 15–93 (RKPGVYRMLD…IKELKPPYNI (79 aa)) form the GIY-YIG domain. One can recognise a UVR domain in the interval 203–238 (REVADQLSTDMEAAAAALEFEKAALLRDQLAAIQAV). Basic residues predominate over residues 542 to 551 (HRARRGKARK). The disordered stretch occupies residues 542-561 (HRARRGKARKQSTLDEIPGI).

This sequence belongs to the UvrC family. As to quaternary structure, interacts with UvrB in an incision complex.

It is found in the cytoplasm. Functionally, the UvrABC repair system catalyzes the recognition and processing of DNA lesions. UvrC both incises the 5' and 3' sides of the lesion. The N-terminal half is responsible for the 3' incision and the C-terminal half is responsible for the 5' incision. This is UvrABC system protein C from Alcanivorax borkumensis (strain ATCC 700651 / DSM 11573 / NCIMB 13689 / SK2).